We begin with the raw amino-acid sequence, 107 residues long: NADH-quinone oxidoreductase subunit K (107 aa).

3 consecutive transmembrane segments (helical) span residues 11-31, 36-56, and 67-87; these read LTHY…GVLL, IVLL…FVAF, and IMVF…LALA.

It belongs to the complex I subunit 4L family. NDH-1 is composed of 14 different subunits. Subunits NuoA, H, J, K, L, M, N constitute the membrane sector of the complex.

It localises to the cell inner membrane. The catalysed reaction is a quinone + NADH + 5 H(+)(in) = a quinol + NAD(+) + 4 H(+)(out). NDH-1 shuttles electrons from NADH, via FMN and iron-sulfur (Fe-S) centers, to quinones in the respiratory chain. The immediate electron acceptor for the enzyme in this species is believed to be ubiquinone. Couples the redox reaction to proton translocation (for every two electrons transferred, four hydrogen ions are translocated across the cytoplasmic membrane), and thus conserves the redox energy in a proton gradient. The polypeptide is NADH-quinone oxidoreductase subunit K (Bdellovibrio bacteriovorus (strain ATCC 15356 / DSM 50701 / NCIMB 9529 / HD100)).